A 363-amino-acid polypeptide reads, in one-letter code: NADH-quinone oxidoreductase subunit H (363 aa).

Helical transmembrane passes span 29-49, 62-82, 96-116, 127-147, 163-183, 202-222, 239-257, 264-286, 299-319, and 339-359; these read VLKI…YVVW, GPMY…KLLF, FIIA…VVPF, VGLL…ILAG, AAQV…VMIA, FFDW…VSGV, IVAG…LFFL, ILVS…QGWV, TGGW…YIWF, and FIPL…YGVI.

Belongs to the complex I subunit 1 family. NDH-1 is composed of 14 different subunits. Subunits NuoA, H, J, K, L, M, N constitute the membrane sector of the complex.

It is found in the cell inner membrane. It catalyses the reaction a quinone + NADH + 5 H(+)(in) = a quinol + NAD(+) + 4 H(+)(out). NDH-1 shuttles electrons from NADH, via FMN and iron-sulfur (Fe-S) centers, to quinones in the respiratory chain. The immediate electron acceptor for the enzyme in this species is believed to be ubiquinone. Couples the redox reaction to proton translocation (for every two electrons transferred, four hydrogen ions are translocated across the cytoplasmic membrane), and thus conserves the redox energy in a proton gradient. This subunit may bind ubiquinone. This chain is NADH-quinone oxidoreductase subunit H, found in Xanthomonas campestris pv. campestris (strain B100).